The chain runs to 123 residues: WAP four-disulfide core domain protein 5 (123 aa).

A signal peptide spans 1–24 (MRIQSLLLLGALLAVGSQPPAAFG). 2 consecutive WAP domains span residues 27 to 73 (KGEK…CVPR) and 74 to 121 (VSVK…RDPA). Cystine bridges form between C34–C62, C41–C66, C49–C61, C55–C70, C81–C109, C88–C113, C96–C108, and C102–C117.

The protein localises to the secreted. Its function is as follows. Putative acid-stable proteinase inhibitor. In Saimiri boliviensis boliviensis (Bolivian squirrel monkey), this protein is WAP four-disulfide core domain protein 5 (WFDC5).